Here is a 517-residue protein sequence, read N- to C-terminus: Crotonobetaine/carnitine--CoA ligase (517 aa).

It belongs to the ATP-dependent AMP-binding enzyme family.

The catalysed reaction is 4-(trimethylamino)butanoate + ATP + CoA = 4-(trimethylamino)butanoyl-CoA + AMP + diphosphate. It catalyses the reaction crotonobetaine + ATP + CoA = crotonobetainyl-CoA + AMP + diphosphate. It carries out the reaction (R)-carnitine + ATP + CoA = (R)-carnitinyl-CoA + AMP + diphosphate. Its pathway is amine and polyamine metabolism; carnitine metabolism. Catalyzes the transfer of CoA to carnitine, generating the initial carnitinyl-CoA needed for the CaiB reaction cycle. Also has activity toward crotonobetaine and gamma-butyrobetaine. The protein is Crotonobetaine/carnitine--CoA ligase of Salmonella paratyphi C (strain RKS4594).